Here is a 104-residue protein sequence, read N- to C-terminus: Zinc finger C2H2 protein ECU02_0310 (104 aa).

A C2H2-type zinc finger spans residues 56–80 (FYCCECDRHFITEKVLMEHKRSNPH).

It belongs to the ZNF593/BUD20 C2H2-type zinc-finger protein family. As to quaternary structure, associates with pre-60S ribosomal particles; released from the pre-60S particle very early in the cytoplasm.

The protein localises to the nucleus. Its subcellular location is the cytoplasm. Its function is as follows. Involved in pre-60S ribosomal particles maturation by promoting the nuclear export of the 60S ribosome. The chain is Zinc finger C2H2 protein ECU02_0310 from Encephalitozoon cuniculi (strain GB-M1) (Microsporidian parasite).